A 711-amino-acid polypeptide reads, in one-letter code: Probable cadmium-transporting ATPase (711 aa).

One can recognise an HMA domain in the interval 3-66; that stretch reads EKTVYRVDGL…AGAFEHLKII (64 aa). Residues Cys-14 and Cys-17 each contribute to the Cd(2+) site. A run of 5 helical transmembrane segments spans residues 89 to 109, 111 to 131, 151 to 171, 317 to 337, and 347 to 367; these read WRLL…IMNG, DFYL…YSLF, IAII…VVIL, TPAI…LFGG, and LSVL…VAIV. The active-site 4-aspartylphosphate intermediate is Asp-398. Residues 669-689 traverse the membrane as a helical segment; the sequence is VIKLIALLLVIPGWLTLWIAI.

Belongs to the cation transport ATPase (P-type) (TC 3.A.3) family. Type IB subfamily.

It localises to the cell membrane. It carries out the reaction Cd(2+)(in) + ATP + H2O = Cd(2+)(out) + ADP + phosphate + H(+). In terms of biological role, couples the hydrolysis of ATP with the export of cadmium. The sequence is that of Probable cadmium-transporting ATPase (cadA) from Listeria monocytogenes.